Here is a 148-residue protein sequence, read N- to C-terminus: Deoxyuridine 5'-triphosphate nucleotidohydrolase (148 aa).

Substrate-binding positions include 68-70 (RSG), N81, and 85-87 (TID).

Belongs to the dUTPase family. Mg(2+) serves as cofactor.

The enzyme catalyses dUTP + H2O = dUMP + diphosphate + H(+). It functions in the pathway pyrimidine metabolism; dUMP biosynthesis; dUMP from dCTP (dUTP route): step 2/2. Functionally, this enzyme is involved in nucleotide metabolism: it produces dUMP, the immediate precursor of thymidine nucleotides and it decreases the intracellular concentration of dUTP so that uracil cannot be incorporated into DNA. This chain is Deoxyuridine 5'-triphosphate nucleotidohydrolase, found in Geobacter metallireducens (strain ATCC 53774 / DSM 7210 / GS-15).